A 331-amino-acid chain; its full sequence is tRNA N6-adenosine threonylcarbamoyltransferase (331 aa).

Fe cation-binding residues include His-107 and His-111. Substrate-binding positions include 129–133 (LVSGG), Asp-162, Gly-175, and Asn-269. Position 297 (Asp-297) interacts with Fe cation.

This sequence belongs to the KAE1 / TsaD family. Fe(2+) serves as cofactor.

The protein localises to the cytoplasm. The catalysed reaction is L-threonylcarbamoyladenylate + adenosine(37) in tRNA = N(6)-L-threonylcarbamoyladenosine(37) in tRNA + AMP + H(+). Required for the formation of a threonylcarbamoyl group on adenosine at position 37 (t(6)A37) in tRNAs that read codons beginning with adenine. Is involved in the transfer of the threonylcarbamoyl moiety of threonylcarbamoyl-AMP (TC-AMP) to the N6 group of A37, together with TsaE and TsaB. TsaD likely plays a direct catalytic role in this reaction. The polypeptide is tRNA N6-adenosine threonylcarbamoyltransferase (Wolinella succinogenes (strain ATCC 29543 / DSM 1740 / CCUG 13145 / JCM 31913 / LMG 7466 / NCTC 11488 / FDC 602W) (Vibrio succinogenes)).